The chain runs to 418 residues: Actin-related protein 3 (418 aa).

The protein belongs to the actin family. ARP3 subfamily. In terms of assembly, component of the Arp2/3 complex composed of actr2/arp2, actr3/arp3, arpc1b, arpc2, arpc3, arpc4 and arpc5.

It is found in the cytoplasm. The protein localises to the cytoskeleton. It localises to the cell projection. Its subcellular location is the nucleus. Its function is as follows. ATP-binding component of the Arp2/3 complex, a multiprotein complex that mediates actin polymerization upon stimulation by nucleation-promoting factor (NPF). The Arp2/3 complex mediates the formation of branched actin networks in the cytoplasm, providing the force for cell motility. Seems to contact the pointed end of the daughter actin filament. In addition to its role in the cytoplasmic cytoskeleton, the Arp2/3 complex also promotes actin polymerization in the nucleus, thereby regulating gene transcription and repair of damaged DNA. The Arp2/3 complex promotes homologous recombination (HR) repair in response to DNA damage by promoting nuclear actin polymerization, leading to drive motility of double-strand breaks (DSBs). In Takifugu rubripes (Japanese pufferfish), this protein is Actin-related protein 3 (actr3).